Here is a 655-residue protein sequence, read N- to C-terminus: Ribonuclease 3 (655 aa).

Disordered stretches follow at residues 1-148 and 171-376; these read MENL…NSEK and LIAP…NIPL. The segment at 1 to 400 is unknown; the sequence is MENLEKNTKK…NYIKDNYPVI (400 aa). Positions 8–20 are enriched in basic residues; the sequence is TKKKIKKPNNFKK. Composition is skewed to basic and acidic residues over residues 21–34 and 69–89; these read NNKD…DKPT and DYEK…RSDE. Low complexity predominate over residues 92-102; the sequence is NNNSKKQNNNK. Residues 103–115 show a composition bias toward basic residues; the sequence is QAKKKANKNKKQK. The span at 135–148 shows a compositional bias: polar residues; that stretch reads AANNQVKAIPNSEK. The span at 206 to 223 shows a compositional bias: low complexity; sequence NNFVNNQKNHNKNNAGNK. Composition is skewed to polar residues over residues 229–242 and 250–259; these read PTKP…SKST and PNFTSNQPKP. Composition is skewed to basic and acidic residues over residues 260–274 and 298–309; these read TQKE…KKAE and DQTKKKQPKENK. Over residues 310–332 the composition is skewed to low complexity; it reads NQQIKAVNLNNNQQKTNNNNQKN. Positions 333 to 350 are enriched in basic and acidic residues; the sequence is SVDKSENDNNKKKSEANQ. Low complexity predominate over residues 351–360; that stretch reads KQENLNPNNN. Residues 401–655 are RNase 3; it reads YADLKEKNRL…KFRGLLKLEK (255 aa). Positions 432–556 constitute an RNase III domain; sequence LELLLKKFKV…FIGAMYLDQG (125 aa). E472 contacts Mg(2+). D476 is an active-site residue. Mg(2+)-binding residues include D542 and E545. Residue E545 is part of the active site. The DRBM domain occupies 582–649; it reads DYKSIFQEII…AKEAISKFRG (68 aa).

This sequence belongs to the ribonuclease III family. In terms of assembly, homodimer. Requires Mg(2+) as cofactor.

The protein resides in the cytoplasm. It catalyses the reaction Endonucleolytic cleavage to 5'-phosphomonoester.. Its function is as follows. Digests double-stranded RNA. Involved in the processing of primary rRNA transcript to yield the immediate precursors to the large and small rRNAs (23S and 16S). Processes some mRNAs, and tRNAs when they are encoded in the rRNA operon. Processes pre-crRNA and tracrRNA of type II CRISPR loci if present in the organism. The protein is Ribonuclease 3 (rnc) of Mycoplasmoides gallisepticum (strain R(low / passage 15 / clone 2)) (Mycoplasma gallisepticum).